We begin with the raw amino-acid sequence, 376 residues long: UPF0754 membrane protein SSP0953 (376 aa).

2 helical membrane passes run 4–24 (FLVI…TNVI) and 356–376 (FLGF…AIFV).

Belongs to the UPF0754 family.

It localises to the cell membrane. This is UPF0754 membrane protein SSP0953 from Staphylococcus saprophyticus subsp. saprophyticus (strain ATCC 15305 / DSM 20229 / NCIMB 8711 / NCTC 7292 / S-41).